Reading from the N-terminus, the 56-residue chain is Venom peptide 5 (56 aa).

An N-terminal signal peptide occupies residues 1 to 26 (MKTASFILSFVVLLIVIITWIGEVSA). Residues 27–42 (VSEPEPVAKATAHAAA) constitute a propeptide that is removed on maturation. A disulfide bridge links Cys49 with Cys54.

In terms of processing, probably contains 1 disulfide bond, which may be crucial for activity, since the linear peptide without disulfide bond is inactive. As to expression, expressed by the venom gland.

Its subcellular location is the secreted. This Eumenes pomiformis (Potter wasp) protein is Venom peptide 5.